The primary structure comprises 77 residues: Small ribosomal subunit protein bS16c (77 aa).

It belongs to the bacterial ribosomal protein bS16 family.

It localises to the plastid. The protein resides in the cyanelle. This Cyanophora paradoxa protein is Small ribosomal subunit protein bS16c.